We begin with the raw amino-acid sequence, 271 residues long: Aminodeoxychorismate lyase (271 aa).

An N6-(pyridoxal phosphate)lysine modification is found at lysine 140.

This sequence belongs to the class-IV pyridoxal-phosphate-dependent aminotransferase family. In terms of assembly, homodimer. Pyridoxal 5'-phosphate serves as cofactor.

It carries out the reaction 4-amino-4-deoxychorismate = 4-aminobenzoate + pyruvate + H(+). Its pathway is cofactor biosynthesis; tetrahydrofolate biosynthesis; 4-aminobenzoate from chorismate: step 2/2. In terms of biological role, involved in the biosynthesis of p-aminobenzoate (PABA), a precursor of tetrahydrofolate. Converts 4-amino-4-deoxychorismate into 4-aminobenzoate (PABA) and pyruvate. This is Aminodeoxychorismate lyase (pabC) from Vibrio harveyi (Beneckea harveyi).